The sequence spans 121 residues: uncharacterized protein (121 aa).

The 69-residue stretch at 9–77 (KPIYLQIADQ…RGQGTFIAEK (69 aa)) folds into the HTH gntR-type domain. Positions 37 to 56 (VREMAIQTKVNPNTIQRTYS) form a DNA-binding region, H-T-H motif.

This is an uncharacterized protein from Bacillus subtilis (strain 168).